The following is a 93-amino-acid chain: Pyrimidine/purine nucleoside phosphorylase (93 aa).

It belongs to the nucleoside phosphorylase PpnP family.

It carries out the reaction a purine D-ribonucleoside + phosphate = a purine nucleobase + alpha-D-ribose 1-phosphate. It catalyses the reaction adenosine + phosphate = alpha-D-ribose 1-phosphate + adenine. The catalysed reaction is cytidine + phosphate = cytosine + alpha-D-ribose 1-phosphate. The enzyme catalyses guanosine + phosphate = alpha-D-ribose 1-phosphate + guanine. It carries out the reaction inosine + phosphate = alpha-D-ribose 1-phosphate + hypoxanthine. It catalyses the reaction thymidine + phosphate = 2-deoxy-alpha-D-ribose 1-phosphate + thymine. The catalysed reaction is uridine + phosphate = alpha-D-ribose 1-phosphate + uracil. The enzyme catalyses xanthosine + phosphate = alpha-D-ribose 1-phosphate + xanthine. Its function is as follows. Catalyzes the phosphorolysis of diverse nucleosides, yielding D-ribose 1-phosphate and the respective free bases. Can use uridine, adenosine, guanosine, cytidine, thymidine, inosine and xanthosine as substrates. Also catalyzes the reverse reactions. The protein is Pyrimidine/purine nucleoside phosphorylase of Tolumonas auensis (strain DSM 9187 / NBRC 110442 / TA 4).